The sequence spans 145 residues: Maximins 5/H4 type 2 (145 aa).

The signal sequence occupies residues 1–18; sequence MNFKYIVAVSFLIASAYA. Propeptides lie at residues 19–43 and 74–124; these read RSVQ…REIR and TAEE…KEKR. At L144 the chain carries Leucine amide.

This sequence belongs to the bombinin family. Expressed by the skin glands.

It is found in the secreted. In terms of biological role, maximin-5 shows antibacterial activity against both Gram-positive and Gram-negative bacteria. The only exception is the resistance of E.coli. Also shows antimicrobial activity against fungi C.albicans, A.flavus and P.uticale. It has little hemolytic activity. It does not possess a significant cytotoxicity against tumor cell lines. It does not possess a significant anti-HIV activity. Maximin-H4 shows antibacterial activity against both Gram-positive and Gram-negative bacteria. It also shows antimicrobial activity against the fungus C.albicans. Shows strong hemolytic activity. The sequence is that of Maximins 5/H4 type 2 from Bombina maxima (Giant fire-bellied toad).